The following is a 903-amino-acid chain: Protein translocase subunit SecA (903 aa).

ATP contacts are provided by residues glutamine 87, 105–109, and aspartate 507; that span reads GEGKT. The tract at residues 854 to 893 is disordered; that stretch reads STMADSSGDVKSSTAESKAPYVRDGRKVGRNEPCPCGSGK. The segment covering 856-869 has biased composition (polar residues); sequence MADSSGDVKSSTAE. Residues 874–883 show a composition bias toward basic and acidic residues; sequence YVRDGRKVGR. Zn(2+) is bound by residues cysteine 887, cysteine 889, cysteine 898, and histidine 899.

The protein belongs to the SecA family. As to quaternary structure, monomer and homodimer. Part of the essential Sec protein translocation apparatus which comprises SecA, SecYEG and auxiliary proteins SecDF-YajC and YidC. It depends on Zn(2+) as a cofactor.

It is found in the cell inner membrane. The protein localises to the cytoplasm. The enzyme catalyses ATP + H2O + cellular proteinSide 1 = ADP + phosphate + cellular proteinSide 2.. Its function is as follows. Part of the Sec protein translocase complex. Interacts with the SecYEG preprotein conducting channel. Has a central role in coupling the hydrolysis of ATP to the transfer of proteins into and across the cell membrane, serving both as a receptor for the preprotein-SecB complex and as an ATP-driven molecular motor driving the stepwise translocation of polypeptide chains across the membrane. The chain is Protein translocase subunit SecA from Nitrosococcus oceani (strain ATCC 19707 / BCRC 17464 / JCM 30415 / NCIMB 11848 / C-107).